Consider the following 218-residue polypeptide: MGQKVNPTGLRVGIIRDWDAKWYAEKDFASNLHEDLRIRKYIESKLADASVSTVEIERAAKRVNISIHTAKPGMVIGKGGSEVEKLRKELNNLTGKRVHINIVEIKKPDLDAKLVGESIAEQLENRVAFRRAMKQAIQRTMRAGAKGIKVQVAGRLNGADMSRVERFSEGTVPLHTLRADIDYSWVEAHTTYGKLGVKTWIYRGEVLPAKKENSKGGK.

A KH type-2 domain is found at 38 to 106 (IRKYIESKLA…RVHINIVEIK (69 aa)).

This sequence belongs to the universal ribosomal protein uS3 family. Part of the 30S ribosomal subunit. Forms a tight complex with proteins S10 and S14.

Functionally, binds the lower part of the 30S subunit head. Binds mRNA in the 70S ribosome, positioning it for translation. The chain is Small ribosomal subunit protein uS3 from Ligilactobacillus salivarius (strain UCC118) (Lactobacillus salivarius).